The following is a 174-amino-acid chain: uncharacterized protein (174 aa).

This is an uncharacterized protein from Aquifex aeolicus (strain VF5).